The sequence spans 492 residues: N-succinylglutamate 5-semialdehyde dehydrogenase (492 aa).

220-225 contacts NAD(+); it reads GSANTG. Active-site residues include Glu-243 and Cys-277.

Belongs to the aldehyde dehydrogenase family. AstD subfamily.

It carries out the reaction N-succinyl-L-glutamate 5-semialdehyde + NAD(+) + H2O = N-succinyl-L-glutamate + NADH + 2 H(+). It participates in amino-acid degradation; L-arginine degradation via AST pathway; L-glutamate and succinate from L-arginine: step 4/5. Its function is as follows. Catalyzes the NAD-dependent reduction of succinylglutamate semialdehyde into succinylglutamate. In Escherichia fergusonii (strain ATCC 35469 / DSM 13698 / CCUG 18766 / IAM 14443 / JCM 21226 / LMG 7866 / NBRC 102419 / NCTC 12128 / CDC 0568-73), this protein is N-succinylglutamate 5-semialdehyde dehydrogenase.